The chain runs to 32 residues: Seminal plasma protein PDC-109 (32 aa).

Residues 1–32 form a disordered region; it reads DQDEGVSTEPTQVGPAELHNDETCVGPLVYRN. T11 carries O-linked (GalNAc...) threonine glycosylation. One can recognise a Fibronectin type-II domain in the interval 19 to 32; that stretch reads HNDETCVGPLVYRN.

It belongs to the seminal plasma protein family. Homodimer.

It localises to the secreted. In terms of biological role, could enhance the fertilizing capacity of bull spermatozoa upon interaction with heparin-like glycosaminoglycans present in the female genital tract. Exhibits both simulatory and inhibitory actions on the release of pituitary gonadotropins. Binds to heparin and gelatin. This chain is Seminal plasma protein PDC-109, found in Bos indicus (Zebu).